The sequence spans 512 residues: MKRALVSVSDKNNLVPFVKKLVEHDFEIVSTGGTKKYLDEAGIKTISVEEVTHFPEILDGRVKTLNPYIHGGLLARRELPEHMETLKEQNITPIDLVCVNLYPFKQTIENPEVTLENAIENIDIGGPSMLRSAAKNYRDVVVVVDADDYEGLEKELDENGEISLETRFKLSAKTFRHTAAYDALIADYLSKQAGEDNPEKLTLTYDLISSMRYGENSHQKAWFYEDAMPKAYSITQAKQLNGKKLSFNNIRDADAAIRAVREFDGPTVVALKHMNPCGIGQADNIELAWDRAYEADSISIFGGVIALNRKVDLATAEKMHKLFLEIIIAPEFDADALEVLSKKKNLRLLQLDFTKKDEDVRDETVSIMGGLLRQEQDVIDENPKNWEVVTENAPSDSQLETLLFAWKAVKHTKSNAIVVANDERTLGIGAGQPNRIDSTKIAIKHAGDSLNDKAVLASDAFFPMDDCVQYAAEHGIKAIVQPGGSIRDKDSIAMANKYGVAMVFTGVRHFRH.

Residues 1–144 form the MGS-like domain; that stretch reads MKRALVSVSD…KNYRDVVVVV (144 aa).

The protein belongs to the PurH family.

The enzyme catalyses (6R)-10-formyltetrahydrofolate + 5-amino-1-(5-phospho-beta-D-ribosyl)imidazole-4-carboxamide = 5-formamido-1-(5-phospho-D-ribosyl)imidazole-4-carboxamide + (6S)-5,6,7,8-tetrahydrofolate. The catalysed reaction is IMP + H2O = 5-formamido-1-(5-phospho-D-ribosyl)imidazole-4-carboxamide. Its pathway is purine metabolism; IMP biosynthesis via de novo pathway; 5-formamido-1-(5-phospho-D-ribosyl)imidazole-4-carboxamide from 5-amino-1-(5-phospho-D-ribosyl)imidazole-4-carboxamide (10-formyl THF route): step 1/1. It participates in purine metabolism; IMP biosynthesis via de novo pathway; IMP from 5-formamido-1-(5-phospho-D-ribosyl)imidazole-4-carboxamide: step 1/1. This chain is Bifunctional purine biosynthesis protein PurH, found in Ligilactobacillus salivarius (strain UCC118) (Lactobacillus salivarius).